The primary structure comprises 138 residues: Transcription antitermination protein NusB (138 aa).

This sequence belongs to the NusB family.

Functionally, involved in transcription antitermination. Required for transcription of ribosomal RNA (rRNA) genes. Binds specifically to the boxA antiterminator sequence of the ribosomal RNA (rrn) operons. The polypeptide is Transcription antitermination protein NusB (Blochmanniella floridana).